The primary structure comprises 209 residues: Thymidylate kinase (209 aa).

Glycine 10–serine 17 contacts ATP.

The protein belongs to the thymidylate kinase family.

It catalyses the reaction dTMP + ATP = dTDP + ADP. Phosphorylation of dTMP to form dTDP in both de novo and salvage pathways of dTTP synthesis. This chain is Thymidylate kinase, found in Synechococcus sp. (strain CC9902).